Reading from the N-terminus, the 351-residue chain is Photosystem II D2 protein (351 aa).

Residues 39–59 traverse the membrane as a helical segment; that stretch reads TAYLAAGGWMTGTTFVTSWYT. H116 serves as a coordination point for chlorophyll a. A helical transmembrane segment spans residues 123–139; it reads GFCLRQFEIARLVGIRP. 2 residues coordinate pheophytin a: Q128 and N141. The chain crosses the membrane as a helical span at residues 151–164; that stretch reads VFVSVFLLYPLGQA. Position 196 (H196) interacts with chlorophyll a. The helical transmembrane segment at 206-226 threads the bilayer; sequence GALLCAIHGATVENTLFEDGD. A plastoquinone contacts are provided by H213 and F260. H213 is a binding site for Fe cation. H267 contacts Fe cation. Residues 277–293 form a helical membrane-spanning segment; the sequence is GLWTSAIGIVGLALNLR.

This sequence belongs to the reaction center PufL/M/PsbA/D family. In terms of assembly, PSII is composed of 1 copy each of membrane proteins PsbA, PsbB, PsbC, PsbD, PsbE, PsbF, PsbH, PsbI, PsbJ, PsbK, PsbL, PsbM, PsbT, PsbX, PsbY, PsbZ, Psb30/Ycf12, at least 3 peripheral proteins of the oxygen-evolving complex and a large number of cofactors. It forms dimeric complexes. The cofactor is The D1/D2 heterodimer binds P680, chlorophylls that are the primary electron donor of PSII, and subsequent electron acceptors. It shares a non-heme iron and each subunit binds pheophytin, quinone, additional chlorophylls, carotenoids and lipids. There is also a Cl(-1) ion associated with D1 and D2, which is required for oxygen evolution. The PSII complex binds additional chlorophylls, carotenoids and specific lipids..

The protein localises to the plastid. Its subcellular location is the chloroplast thylakoid membrane. The enzyme catalyses 2 a plastoquinone + 4 hnu + 2 H2O = 2 a plastoquinol + O2. Its function is as follows. Photosystem II (PSII) is a light-driven water:plastoquinone oxidoreductase that uses light energy to abstract electrons from H(2)O, generating O(2) and a proton gradient subsequently used for ATP formation. It consists of a core antenna complex that captures photons, and an electron transfer chain that converts photonic excitation into a charge separation. The D1/D2 (PsbA/PsbD) reaction center heterodimer binds P680, the primary electron donor of PSII as well as several subsequent electron acceptors. D2 is needed for assembly of a stable PSII complex. The sequence is that of Photosystem II D2 protein from Trieres chinensis (Marine centric diatom).